We begin with the raw amino-acid sequence, 487 residues long: N-succinylglutamate 5-semialdehyde dehydrogenase (487 aa).

Gly221–Gly226 contributes to the NAD(+) binding site. Catalysis depends on residues Glu244 and Cys278.

It belongs to the aldehyde dehydrogenase family. AstD subfamily.

The catalysed reaction is N-succinyl-L-glutamate 5-semialdehyde + NAD(+) + H2O = N-succinyl-L-glutamate + NADH + 2 H(+). It participates in amino-acid degradation; L-arginine degradation via AST pathway; L-glutamate and succinate from L-arginine: step 4/5. Its function is as follows. Catalyzes the NAD-dependent reduction of succinylglutamate semialdehyde into succinylglutamate. This chain is N-succinylglutamate 5-semialdehyde dehydrogenase, found in Burkholderia multivorans (strain ATCC 17616 / 249).